The following is a 182-amino-acid chain: Small ribosomal subunit protein uS4c (182 aa).

The disordered stretch occupies residues 12-31 (PGFTSKRPRSGSDLKNPLRS). The region spanning 82–143 (MRLDNILFRL…KQRSKALIQN (62 aa)) is the S4 RNA-binding domain.

It belongs to the universal ribosomal protein uS4 family. In terms of assembly, part of the 30S ribosomal subunit. Contacts protein S5. The interaction surface between S4 and S5 is involved in control of translational fidelity.

The protein resides in the plastid. It localises to the chloroplast. In terms of biological role, one of the primary rRNA binding proteins, it binds directly to 16S rRNA where it nucleates assembly of the body of the 30S subunit. Functionally, with S5 and S12 plays an important role in translational accuracy. The protein is Small ribosomal subunit protein uS4c (rps4) of Hymenocallis littoralis (Beach spider-lily).